A 482-amino-acid polypeptide reads, in one-letter code: MPSELPNFIPAVPEMFVLFMALVILLAGVFIKKRHQIPYYLTQITLILVAGLTWYIFTYSDFAETSFTFHHMFVLDRFSVYLKLFIYLSVFFAFIYAREYNDERKIPHTEFYVLGLLSMLGMVALVSSSNLLTVFLGLELLSLPTYAMVALYRNKTRSVEAGMKYFVIGAIASGMLLYGMSMIFGATQSLDLTEIAKAVSATPLHQNLILVFGLVFIVAGVAFKLGTAPFHMWVPDVYEGAPSSVTLFISTAPKIAAYAMIIRLLILGMPALHVQWHQMLIVVAILSMGIGNFAAIVQSNIKRMLAYSSIAHMGYMLLGVLCGTRNGYAAAMFYTITYSLMSLGAFGMVVLMSRGGFEAENINDFAGLNSRNPWLAFMMMLILFSLAGVPPLVGFIAKVGVLDALIQVHLVWLAVLAVLFAIVGAYYYIRVVKVMYFESAPPQLKPIRCSLEMKIAISLNGLAVLFIGIFPGWLYALSHLAF.

Transmembrane regions (helical) follow at residues 11–31, 37–57, 77–97, 106–126, 131–151, 166–186, 208–228, 255–275, 279–299, 304–324, 332–352, 376–396, 404–424, and 462–482; these read AVPE…GVFI, IPYY…WYIF, RFSV…FIYA, IPHT…VALV, LLTV…MVAL, FVIG…IFGA, LILV…LGTA, IAAY…LHVQ, MLIV…IVQS, MLAY…LCGT, MFYT…VVLM, AFMM…VGFI, ALIQ…AIVG, and LAVL…HLAF.

Belongs to the complex I subunit 2 family. NDH-1 is composed of 14 different subunits. Subunits NuoA, H, J, K, L, M, N constitute the membrane sector of the complex.

The protein resides in the cell inner membrane. The enzyme catalyses a quinone + NADH + 5 H(+)(in) = a quinol + NAD(+) + 4 H(+)(out). In terms of biological role, NDH-1 shuttles electrons from NADH, via FMN and iron-sulfur (Fe-S) centers, to quinones in the respiratory chain. The immediate electron acceptor for the enzyme in this species is believed to be ubiquinone. Couples the redox reaction to proton translocation (for every two electrons transferred, four hydrogen ions are translocated across the cytoplasmic membrane), and thus conserves the redox energy in a proton gradient. The sequence is that of NADH-quinone oxidoreductase subunit N from Coxiella burnetii (strain RSA 493 / Nine Mile phase I).